The primary structure comprises 276 residues: Large ribosomal subunit protein uL2 (276 aa).

Disordered regions lie at residues 29 to 55 and 219 to 276; these read PEKSLTTYKHSRQGRNNRGVITSRHRG and HVRG…RRTR. Basic residues predominate over residues 259 to 276; it reads TRNKKKQSSKLIVRRRTR.

Belongs to the universal ribosomal protein uL2 family. Part of the 50S ribosomal subunit. Forms a bridge to the 30S subunit in the 70S ribosome.

Its function is as follows. One of the primary rRNA binding proteins. Required for association of the 30S and 50S subunits to form the 70S ribosome, for tRNA binding and peptide bond formation. It has been suggested to have peptidyltransferase activity; this is somewhat controversial. Makes several contacts with the 16S rRNA in the 70S ribosome. The protein is Large ribosomal subunit protein uL2 of Rippkaea orientalis (strain PCC 8801 / RF-1) (Cyanothece sp. (strain PCC 8801)).